The sequence spans 692 residues: Elongation factor G (692 aa).

Residues 8-282 form the tr-type G domain; that stretch reads ENTRNIGIMA…AVIDYLPSPL (275 aa). Residues 17 to 24, 81 to 85, and 135 to 138 each bind GTP; these read AHIDAGKT, DTPGH, and NKMD.

It belongs to the TRAFAC class translation factor GTPase superfamily. Classic translation factor GTPase family. EF-G/EF-2 subfamily.

It localises to the cytoplasm. In terms of biological role, catalyzes the GTP-dependent ribosomal translocation step during translation elongation. During this step, the ribosome changes from the pre-translocational (PRE) to the post-translocational (POST) state as the newly formed A-site-bound peptidyl-tRNA and P-site-bound deacylated tRNA move to the P and E sites, respectively. Catalyzes the coordinated movement of the two tRNA molecules, the mRNA and conformational changes in the ribosome. This is Elongation factor G from Bacillus mycoides (strain KBAB4) (Bacillus weihenstephanensis).